The chain runs to 379 residues: MLKLIVETKTLVQSLGFASSVVEKRNVIPEYANIKLSAKDGNLELSSTNMDLYLSQKIAVQVVSEGELTVSTKTLNDIVRKLPDSELTLTDLGTTGLEIKGKNCKFNLFTLPVSSFPPMDSINPEASFKISCTDFAKIIESTKFSISLDETRYNLNGVYLHIKDKEFCSASTDGHRLSISWVTLEKQIKNFGVILPQKSAEEILKIVKDPKNINEDIEILLSSNKIKFICNENTIMLSKLIDGTFPDYSAFIPESSSSKLVINRKIFADSIERIAIITVEKFRAVKLSLSRETLEISAVGEARGNAKEVINSSQDKESFYEYNSDESLAIGFNPQYLEDVLKAVKSDLVELYFSDVSAPVLIKFPENPKDIFVVMPVKV.

The protein belongs to the beta sliding clamp family. As to quaternary structure, forms a ring-shaped head-to-tail homodimer around DNA which binds and tethers DNA polymerases and other proteins to the DNA. The DNA replisome complex has a single clamp-loading complex (3 tau and 1 each of delta, delta', psi and chi subunits) which binds 3 Pol III cores (1 core on the leading strand and 2 on the lagging strand) each with a beta sliding clamp dimer. Additional proteins in the replisome are other copies of gamma, psi and chi, Ssb, DNA helicase and RNA primase.

The protein resides in the cytoplasm. Functionally, confers DNA tethering and processivity to DNA polymerases and other proteins. Acts as a clamp, forming a ring around DNA (a reaction catalyzed by the clamp-loading complex) which diffuses in an ATP-independent manner freely and bidirectionally along dsDNA. Initially characterized for its ability to contact the catalytic subunit of DNA polymerase III (Pol III), a complex, multichain enzyme responsible for most of the replicative synthesis in bacteria; Pol III exhibits 3'-5' exonuclease proofreading activity. The beta chain is required for initiation of replication as well as for processivity of DNA replication. This Rickettsia felis (strain ATCC VR-1525 / URRWXCal2) (Rickettsia azadi) protein is Beta sliding clamp (dnaN).